The primary structure comprises 98 residues: Large ribosomal subunit protein bL21 (98 aa).

It belongs to the bacterial ribosomal protein bL21 family. As to quaternary structure, part of the 50S ribosomal subunit. Contacts protein L20.

This protein binds to 23S rRNA in the presence of protein L20. This is Large ribosomal subunit protein bL21 from Aquifex aeolicus (strain VF5).